The following is a 286-amino-acid chain: 33 kDa chaperonin (286 aa).

2 cysteine pairs are disulfide-bonded: Cys-236–Cys-238 and Cys-264–Cys-267.

It belongs to the HSP33 family. Post-translationally, under oxidizing conditions two disulfide bonds are formed involving the reactive cysteines. Under reducing conditions zinc is bound to the reactive cysteines and the protein is inactive.

The protein resides in the cytoplasm. Functionally, redox regulated molecular chaperone. Protects both thermally unfolding and oxidatively damaged proteins from irreversible aggregation. Plays an important role in the bacterial defense system toward oxidative stress. In Carboxydothermus hydrogenoformans (strain ATCC BAA-161 / DSM 6008 / Z-2901), this protein is 33 kDa chaperonin.